The primary structure comprises 325 residues: tRNA U34 carboxymethyltransferase (325 aa).

Carboxy-S-adenosyl-L-methionine contacts are provided by residues lysine 91, tryptophan 105, lysine 110, glycine 130, 152–154 (DPS), methionine 196, tyrosine 200, and arginine 315.

The protein belongs to the class I-like SAM-binding methyltransferase superfamily. CmoB family. In terms of assembly, homotetramer.

The catalysed reaction is carboxy-S-adenosyl-L-methionine + 5-hydroxyuridine(34) in tRNA = 5-carboxymethoxyuridine(34) in tRNA + S-adenosyl-L-homocysteine + H(+). Its function is as follows. Catalyzes carboxymethyl transfer from carboxy-S-adenosyl-L-methionine (Cx-SAM) to 5-hydroxyuridine (ho5U) to form 5-carboxymethoxyuridine (cmo5U) at position 34 in tRNAs. The polypeptide is tRNA U34 carboxymethyltransferase (Aeromonas salmonicida (strain A449)).